We begin with the raw amino-acid sequence, 206 residues long: Small ribosomal subunit protein uS4 (206 aa).

The 61-residue stretch at 96 to 156 (GRLDNVVYRM…EKSKKQSRIK (61 aa)) folds into the S4 RNA-binding domain.

Belongs to the universal ribosomal protein uS4 family. As to quaternary structure, part of the 30S ribosomal subunit. Contacts protein S5. The interaction surface between S4 and S5 is involved in control of translational fidelity.

Its function is as follows. One of the primary rRNA binding proteins, it binds directly to 16S rRNA where it nucleates assembly of the body of the 30S subunit. In terms of biological role, with S5 and S12 plays an important role in translational accuracy. The sequence is that of Small ribosomal subunit protein uS4 from Photorhabdus laumondii subsp. laumondii (strain DSM 15139 / CIP 105565 / TT01) (Photorhabdus luminescens subsp. laumondii).